The chain runs to 64 residues: Large ribosomal subunit protein bL35 (64 aa).

The protein belongs to the bacterial ribosomal protein bL35 family.

The chain is Large ribosomal subunit protein bL35 from Ureaplasma parvum serovar 3 (strain ATCC 27815 / 27 / NCTC 11736).